An 872-amino-acid chain; its full sequence is MSSTAVSRARWSSAYASDPTEWERLFEGKWNVVSNILERKLIDPEHKVVYDELMSLLENMTNMCTLLMLEANSQPEPMIGPILDKFFTEQILERVLDWSIQLTDSLKSICQLAIIRIFEMIVSDSHSQNHCLLVHKPILNPLFRLCEWFQRADIYWRVSKSENKKTSEAEKMFVLLLNQICTKLVEDRTLLHFFFHSNQFVVFTELIPFLYSAGDTGQLARDAVLLILSVSAEDKSIAEYVTERTSFCQVLTTGLSACFSQLPRRILGDGGERLVEDEYRDFLADYHSALLFCNAIAQTAHSEVVGNIAEFFYTGFLTNVIKPAFLQNDREYIGASMVYLQMCIETIVEPLLVKSVVQMILTERDDNGTIFFEIVISYVKGGDKTSVTALSLIDSFIKLACEDVMLALVFRPLLTNHSATKKQLSVVYKASRGGHLSQAYLNCIPVCGLPCSFELYMFSTRIRMDARAEQCRKWKWKYDGVVAGSFVLPAESDDDATCHVSFSRMSSSRSSVSMAPYRYTNGTHPSFNINKVCALGKPREEDFSEMEDDLLEEDNDFILPNIDMEDFGEEMTASKVMTQSTIDYMHISGLDGSESDDAMPIRVEDSETDTEAPKSSFVLSGWREVNDMETFKQLLSKQEVKGERLPAENIMDFINEKYDSLKLGEDEKEGKEEKDLEENLIEEPRKRIVTDGFSIYAFPERSKLLQTILEGVETLCENELPFNTELFCLIADLATYPQPILAYYLFDPKQDSSEKHLLTILQSVQTRIDVMAEGIESFDTWIEKGLEALEARACRIRQQSRSSPRSADEHDSTLFYGRSTIPPPGRKPLLREPSHQETLDDQTARRTALAAILLSHLCQMLAAIVLQQSLII.

The segment at 800–841 (SRSSPRSADEHDSTLFYGRSTIPPPGRKPLLREPSHQETLDD) is disordered. Residues 829–841 (LLREPSHQETLDD) are compositionally biased toward basic and acidic residues.

The protein belongs to the FHIP family.

This is FHIP family protein CBG19667 from Caenorhabditis briggsae.